The sequence spans 31 residues: Photosystem II reaction center protein T (31 aa).

The helical transmembrane segment at 3–23 threads the bilayer; the sequence is AIVYTFLLVGTLGIIFFAIFF.

Belongs to the PsbT family. In terms of assembly, PSII is composed of 1 copy each of membrane proteins PsbA, PsbB, PsbC, PsbD, PsbE, PsbF, PsbH, PsbI, PsbJ, PsbK, PsbL, PsbM, PsbT, PsbY, PsbZ, Psb30/Ycf12, at least 3 peripheral proteins of the oxygen-evolving complex and a large number of cofactors. It forms dimeric complexes.

It localises to the plastid. The protein localises to the chloroplast thylakoid membrane. In terms of biological role, found at the monomer-monomer interface of the photosystem II (PS II) dimer, plays a role in assembly and dimerization of PSII. PSII is a light-driven water plastoquinone oxidoreductase, using light energy to abstract electrons from H(2)O, generating a proton gradient subsequently used for ATP formation. The sequence is that of Photosystem II reaction center protein T from Ostreococcus tauri.